Consider the following 1084-residue polypeptide: Transcription elongation factor SPT5 (1084 aa).

Positions 1-91 (MSDSEDSDFS…DDEYEDEDPW (91 aa)) are disordered. Acidic residues-rich tracts occupy residues 20 to 32 (AEEVEENEEEEEQ), 41 to 62 (AEEEGEDLEDEEEYDEEEEEDD), and 77 to 91 (DEADVDDEYEDEDPW). The interval 175-269 (DPNLWTVKCK…TDVLKVVKEV (95 aa)) is interaction with SUPT4H1. KOW domains lie at 272-305 (LKPKSWVRLKRGLYKDDIAQVDYVEPSQNTISLK), 419-450 (LQAGDNVEVCEGELINLQGKILSVDGNKITIM), 471-502 (FRMGDHVKVIAGRYEGDTGLIVRVEENFVILF), and 593-626 (IHVKDIVKVIDGPHSGREGEIRHIFRGFAFLHCK). Residues 312–419 (LDRIKARMSM…TTGKEREHNL (108 aa)) form an interaction with RNA polymerase II region. Phosphoserine is present on serine 665. A disordered region spans residues 667-700 (RISSPMHPGGGGQPQRGGGGGGGGGMGRGRGRRD). Positions 674–694 (PGGGGQPQRGGGGGGGGGMGR) are enriched in gly residues. The KOW 5 domain occupies 702–735 (DLIGQTVRISQGPYKGYIGVVKDATESTARVELH). The interval 748-973 (LTTVGGKERQ…HTPGSNIDQA (226 aa)) is disordered. One copy of the CTR1-1; approximate repeat lies at 758–763 (GRSSTH). Positions 758-815 (GRSSTHLRTPMYGSQTPIYGTGSRTPMYGSQTPLHDGSRTPHYGSQTPLHDGSRTPGQ) are 8 X 7 AA approximate tandem repeats of G-S-[QR]-T-P-X-[YQ], motif CTR1. Residues 759-790 (RSSTHLRTPMYGSQTPIYGTGSRTPMYGSQTP) are compositionally biased toward polar residues. Residues 764–769 (LRTPMY) form a CTR1-2; approximate repeat. The stretch at 770–776 (GSQTPIY) is one CTR1-3 repeat. Threonine 773 and threonine 782 each carry phosphothreonine; by CDK9. The stretch at 779–785 (GSRTPMY) is one CTR1-4 repeat. Residues 786-792 (GSQTPLH) form a CTR1-5 repeat. The stretch at 794 to 800 (GSRTPHY) is one CTR1-6 repeat. The stretch at 801–807 (GSQTPLH) is one CTR1-7 repeat. The stretch at 809–815 (GSRTPGQ) is one CTR1-8 repeat. The segment covering 832-842 (DEYEFAYDDEP) has biased composition (acidic residues). One copy of the CTR2-1 repeat lies at 842-849 (PSPSPQGY). Positions 842-948 (PSPSPQGYGG…ASPSPSPVGY (107 aa)) are 10 X 8 AA approximate tandem repeats of P-[TS]-P-S-P-[QA]-[SG]-Y, motif CTR2. Residues 852–860 (TPNPQTPGY) form a CTR2-2; approximate repeat. The span at 855–864 (PQTPGYPEVP) shows a compositional bias: pro residues. The CTR2-3; approximate repeat unit spans residues 861-867 (PEVPSPQ). Over residues 866 to 888 (PQVNPQYNPQTPGTPAMYNTDQY) the composition is skewed to polar residues. The CTR2-4; half-length repeat unit spans residues 879–883 (TPAMY). A CTR2-5; approximate repeat occupies 894-900 (PSPQGSY). Positions 894–909 (PSPQGSYQPSPSPQSY) are enriched in low complexity. One copy of the CTR2-6 repeat lies at 902–909 (PSPSPQSY). Residues 914–919 (PSPVGY) form a CTR2-7; approximate repeat. The CTR2-8 repeat unit spans residues 922-928 (THSPASY). The stretch at 930 to 937 (PTPSPMAY) is one CTR2-9 repeat. The CTR2-10 repeat unit spans residues 941–948 (PSPSPVGY).

This sequence belongs to the SPT5 family. Interacts with SUPT4H1 to form the DSIF complex. DSIF interacts with RNA polymerase II and with the positive transcription elongation factor b complex (P-TEFb complex), which is composed of CDK9 and cyclin-T. Post-translationally, phosphorylated. Phosphorylation by P-TEFb (CDK9) at Thr residues of the C-terminal repeats alleviates transcriptional pausing and promotes transcription elongation.

It is found in the nucleus. Component of the DRB sensitivity-inducing factor complex (DSIF complex), which regulates mRNA processing and transcription elongation by RNA polymerase II. DSIF positively regulates mRNA capping by stimulating the mRNA guanylyltransferase activity of RNGTT/CAP1A. DSIF also acts cooperatively with the negative elongation factor complex (NELF complex) to enhance transcriptional pausing at sites proximal to the promoter. Transcriptional pausing may facilitate the assembly of an elongation competent RNA polymerase II complex. DSIF and NELF promote pausing by inhibition of the transcription elongation factor TFIIS/S-II. TFIIS/S-II binds to RNA polymerase II at transcription pause sites and stimulates the weak intrinsic nuclease activity of the enzyme. Cleavage of blocked transcripts by RNA polymerase II promotes the resumption of transcription from the new 3' terminus and may allow repeated attempts at transcription through natural pause sites. Following phosphorylation by CDK9, DSIF can also positively regulate transcriptional elongation. Regulation of transcriptional elongation by this protein is required for the expression of genes which control neuronal development. This Danio rerio (Zebrafish) protein is Transcription elongation factor SPT5 (supt5h).